Reading from the N-terminus, the 89-residue chain is Protein PerC (89 aa).

Its function is as follows. Transcriptional activator of eaeA/bfpA expression in enteropathogenic E.coli. The sequence is that of Protein PerC (perC) from Escherichia coli O111:H-.